The sequence spans 190 residues: Imidazoleglycerol-phosphate dehydratase (190 aa).

The protein belongs to the imidazoleglycerol-phosphate dehydratase family.

Its subcellular location is the cytoplasm. The enzyme catalyses D-erythro-1-(imidazol-4-yl)glycerol 3-phosphate = 3-(imidazol-4-yl)-2-oxopropyl phosphate + H2O. Its pathway is amino-acid biosynthesis; L-histidine biosynthesis; L-histidine from 5-phospho-alpha-D-ribose 1-diphosphate: step 6/9. This is Imidazoleglycerol-phosphate dehydratase from Sulfurovum sp. (strain NBC37-1).